Reading from the N-terminus, the 220-residue chain is 7-cyano-7-deazaguanine synthase (220 aa).

Residue 10–20 (FSGGQDSTTCL) participates in ATP binding. Zn(2+)-binding residues include Cys-186, Cys-195, Cys-198, and Cys-201.

Belongs to the QueC family. As to quaternary structure, homodimer. Requires Zn(2+) as cofactor.

The enzyme catalyses 7-carboxy-7-deazaguanine + NH4(+) + ATP = 7-cyano-7-deazaguanine + ADP + phosphate + H2O + H(+). The protein operates within purine metabolism; 7-cyano-7-deazaguanine biosynthesis. In terms of biological role, catalyzes the ATP-dependent conversion of 7-carboxy-7-deazaguanine (CDG) to 7-cyano-7-deazaguanine (preQ(0)). This is 7-cyano-7-deazaguanine synthase from Bacillus cereus (strain B4264).